Reading from the N-terminus, the 95-residue chain is Co-chaperonin GroES (95 aa).

Belongs to the GroES chaperonin family. As to quaternary structure, heptamer of 7 subunits arranged in a ring. Interacts with the chaperonin GroEL.

It localises to the cytoplasm. Its function is as follows. Together with the chaperonin GroEL, plays an essential role in assisting protein folding. The GroEL-GroES system forms a nano-cage that allows encapsulation of the non-native substrate proteins and provides a physical environment optimized to promote and accelerate protein folding. GroES binds to the apical surface of the GroEL ring, thereby capping the opening of the GroEL channel. This is Co-chaperonin GroES from Bordetella petrii (strain ATCC BAA-461 / DSM 12804 / CCUG 43448).